A 233-amino-acid polypeptide reads, in one-letter code: Large ribosomal subunit protein uL1 (233 aa).

It belongs to the universal ribosomal protein uL1 family. As to quaternary structure, part of the 50S ribosomal subunit.

Its function is as follows. Binds directly to 23S rRNA. The L1 stalk is quite mobile in the ribosome, and is involved in E site tRNA release. Functionally, protein L1 is also a translational repressor protein, it controls the translation of the L11 operon by binding to its mRNA. The protein is Large ribosomal subunit protein uL1 of Paracoccus denitrificans (strain Pd 1222).